Reading from the N-terminus, the 232-residue chain is 6-hydroxymethyl-7,8-dihydropterin pyrophosphokinase (232 aa).

The protein belongs to the archaeal 6-HMPDK family. Mg(2+) serves as cofactor.

It catalyses the reaction 6-hydroxymethyl-7,8-dihydropterin + ATP = (7,8-dihydropterin-6-yl)methyl diphosphate + AMP + H(+). It participates in cofactor biosynthesis; 5,6,7,8-tetrahydromethanopterin biosynthesis. Catalyzes the transfer of diphosphate from ATP to 6-hydroxymethyl-7,8-dihydropterin (6-HMD), leading to 6-hydroxymethyl-7,8-dihydropterin diphosphate (6-HMDP). The sequence is that of 6-hydroxymethyl-7,8-dihydropterin pyrophosphokinase from Methanothermobacter thermautotrophicus (strain ATCC 29096 / DSM 1053 / JCM 10044 / NBRC 100330 / Delta H) (Methanobacterium thermoautotrophicum).